Reading from the N-terminus, the 136-residue chain is Blasticidin-S acetyltransferase (136 aa).

The 136-residue stretch at 1 to 136 (MLSLPRLQTV…ITSHLLVKEL (136 aa)) folds into the N-acetyltransferase domain.

In terms of biological role, confers resistance to blasticidin S antibiotic. This is Blasticidin-S acetyltransferase (bls) from Streptomyces morookaense (Streptoverticillium morookaense).